Reading from the N-terminus, the 136-residue chain is Large ribosomal subunit protein uL16 (136 aa).

It belongs to the universal ribosomal protein uL16 family. As to quaternary structure, part of the 50S ribosomal subunit.

Binds 23S rRNA and is also seen to make contacts with the A and possibly P site tRNAs. This is Large ribosomal subunit protein uL16 from Buchnera aphidicola subsp. Acyrthosiphon pisum (strain 5A).